The sequence spans 218 residues: Eukaryotic translation initiation factor 3 subunit K (218 aa).

An N-acetylalanine modification is found at A2. T28 carries the phosphothreonine modification. The PCI domain maps to 42–204; it reads YDLEANLAVL…SIKPKNIVEK (163 aa). S217 carries the phosphoserine modification.

It belongs to the eIF-3 subunit K family. Component of the eukaryotic translation initiation factor 3 (eIF-3) complex, which is composed of 13 subunits: EIF3A, EIF3B, EIF3C, EIF3D, EIF3E, EIF3F, EIF3G, EIF3H, EIF3I, EIF3J, EIF3K, EIF3L and EIF3M. The eIF-3 complex appears to include 3 stable modules: module A is composed of EIF3A, EIF3B, EIF3G and EIF3I; module B is composed of EIF3F, EIF3H, and EIF3M; and module C is composed of EIF3C, EIF3D, EIF3E, EIF3K and EIF3L. EIF3C of module C binds EIF3B of module A and EIF3H of module B, thereby linking the three modules. EIF3J is a labile subunit that binds to the eIF-3 complex via EIF3B. The eIF-3 complex interacts with RPS6KB1 under conditions of nutrient depletion. Mitogenic stimulation leads to binding and activation of a complex composed of MTOR and RPTOR, leading to phosphorylation and release of RPS6KB1 and binding of EIF4B to eIF-3. Interacts with CCND3, but not with CCND1 and CCND2.

The protein resides in the nucleus. The protein localises to the cytoplasm. In terms of biological role, component of the eukaryotic translation initiation factor 3 (eIF-3) complex, which is required for several steps in the initiation of protein synthesis. The eIF-3 complex associates with the 40S ribosome and facilitates the recruitment of eIF-1, eIF-1A, eIF-2:GTP:methionyl-tRNAi and eIF-5 to form the 43S pre-initiation complex (43S PIC). The eIF-3 complex stimulates mRNA recruitment to the 43S PIC and scanning of the mRNA for AUG recognition. The eIF-3 complex is also required for disassembly and recycling of post-termination ribosomal complexes and subsequently prevents premature joining of the 40S and 60S ribosomal subunits prior to initiation. The eIF-3 complex specifically targets and initiates translation of a subset of mRNAs involved in cell proliferation, including cell cycling, differentiation and apoptosis, and uses different modes of RNA stem-loop binding to exert either translational activation or repression. In Bos taurus (Bovine), this protein is Eukaryotic translation initiation factor 3 subunit K.